Reading from the N-terminus, the 339-residue chain is UDP-N-acetylenolpyruvoylglucosamine reductase (339 aa).

The region spanning 19-189 (VDVQARLFAE…LRVRFKLSRV (171 aa)) is the FAD-binding PCMH-type domain. Arginine 166 is an active-site residue. Serine 239 acts as the Proton donor in catalysis. Residue glutamate 335 is part of the active site.

This sequence belongs to the MurB family. The cofactor is FAD.

It is found in the cytoplasm. It catalyses the reaction UDP-N-acetyl-alpha-D-muramate + NADP(+) = UDP-N-acetyl-3-O-(1-carboxyvinyl)-alpha-D-glucosamine + NADPH + H(+). It functions in the pathway cell wall biogenesis; peptidoglycan biosynthesis. Cell wall formation. This chain is UDP-N-acetylenolpyruvoylglucosamine reductase, found in Pseudomonas syringae pv. syringae (strain B728a).